Here is a 356-residue protein sequence, read N- to C-terminus: Protein pelota homolog (356 aa).

It belongs to the eukaryotic release factor 1 family. Pelota subfamily. As to quaternary structure, monomer. It depends on a divalent metal cation as a cofactor.

Its subcellular location is the cytoplasm. In terms of biological role, may function in recognizing stalled ribosomes, interact with stem-loop structures in stalled mRNA molecules, and effect endonucleolytic cleavage of the mRNA. May play a role in the release non-functional ribosomes and degradation of damaged mRNAs. Has endoribonuclease activity. The sequence is that of Protein pelota homolog from Staphylothermus marinus (strain ATCC 43588 / DSM 3639 / JCM 9404 / F1).